The sequence spans 817 residues: TPR repeat-containing protein C19B12.01 (817 aa).

Disordered stretches follow at residues 276–298 and 386–413; these read DQKS…PNHP and GKSP…DGEN. 4 TPR repeats span residues 459–492, 521–554, 555–588, and 625–658; these read LQMW…DPYD, APAQ…NPLS, YPTW…NPED, and WRIW…KGKD.

This chain is TPR repeat-containing protein C19B12.01, found in Schizosaccharomyces pombe (strain 972 / ATCC 24843) (Fission yeast).